The sequence spans 210 residues: Protein-methionine-sulfoxide reductase heme-binding subunit MsrQ (210 aa).

6 consecutive transmembrane segments (helical) span residues 8–28 (LAVF…AWIF), 37–57 (VLVE…MSMT), 75–95 (LGLW…LFIL), 110–130 (PYII…VTSN), 147–167 (LIYV…RADL), and 169–189 (EWAL…PMIT).

Belongs to the MsrQ family. Heterodimer of a catalytic subunit (MsrP) and a heme-binding subunit (MsrQ). FMN is required as a cofactor. The cofactor is heme b.

Its subcellular location is the cell inner membrane. In terms of biological role, part of the MsrPQ system that repairs oxidized periplasmic proteins containing methionine sulfoxide residues (Met-O), using respiratory chain electrons. Thus protects these proteins from oxidative-stress damage caused by reactive species of oxygen and chlorine generated by the host defense mechanisms. MsrPQ is essential for the maintenance of envelope integrity under bleach stress, rescuing a wide series of structurally unrelated periplasmic proteins from methionine oxidation. MsrQ provides electrons for reduction to the reductase catalytic subunit MsrP, using the quinone pool of the respiratory chain. The chain is Protein-methionine-sulfoxide reductase heme-binding subunit MsrQ from Pseudomonas savastanoi pv. phaseolicola (strain 1448A / Race 6) (Pseudomonas syringae pv. phaseolicola (strain 1448A / Race 6)).